Consider the following 198-residue polypeptide: HTH-type transcriptional repressor DhaR (198 aa).

Residues 4 to 64 (TPVRQHLVEK…QVLQEFFSDL (61 aa)) form the HTH tetR-type domain.

Functionally, transcriptional repressor for the dhaA haloalkane dehalogenase gene. This is HTH-type transcriptional repressor DhaR (dhaR) from Mycobacterium sp. (strain GP1).